Reading from the N-terminus, the 261-residue chain is MRVALGIEYDGSQYFGWQRQAEVDTVQERLEKALSIVANEPIAVHCAGRTDAGVHATGQVVHFETNAIRKETAWTLGVNVNLPDNIAVRWVKVVDDEFHARFTATARRYRYMIYNHQLRPGILRSGVSHYPGDIDESKMHQAAQYLLGEQDFTSFRAVHCQSNTPFRCVHEVNVTRQGMYICVDIKANAFLHHMVRNIVGSLLEVGLGNQSVEWIEQLLALKDRNKAAATAKPNGLYLVDVTYPESYQLPKLSLGPLFMLD.

Asp51 serves as the catalytic Nucleophile. Residue Tyr109 participates in substrate binding.

It belongs to the tRNA pseudouridine synthase TruA family. Homodimer.

It catalyses the reaction uridine(38/39/40) in tRNA = pseudouridine(38/39/40) in tRNA. Functionally, formation of pseudouridine at positions 38, 39 and 40 in the anticodon stem and loop of transfer RNAs. This chain is tRNA pseudouridine synthase A, found in Shewanella pealeana (strain ATCC 700345 / ANG-SQ1).